The primary structure comprises 663 residues: Protein-arginine deiminase type-4 (663 aa).

Ca(2+) is bound by residues Asn153, Asp155, Asp157, Asp165, Asp168, Glu170, Asp176, and Asp179. Residues Arg205, Arg212, and Arg218 each carry the citrulline modification. Gln349 lines the Ca(2+) pocket. Asp350 is a catalytic residue. Positions 351, 353, 369, and 370 each coordinate Ca(2+). Citrulline is present on Arg372. Asn373 is a Ca(2+) binding site. A citrulline mark is found at Arg374 and Arg383. Arg374 is a binding site for substrate. Ca(2+) contacts are provided by Asp388, Phe407, Leu410, and Glu411. Catalysis depends on residues His471 and Asp473. Arg639 provides a ligand contact to substrate. Cys645 is a catalytic residue.

This sequence belongs to the protein arginine deiminase family. Ca(2+) is required as a cofactor. In terms of processing, autocitrullination at Arg-372 and Arg-374 inactivates the enzyme. As to expression, expressed in eosinophils and neutrophils, not expressed in peripheral monocytes or lymphocytes.

Its subcellular location is the cytoplasm. It localises to the nucleus. The protein resides in the cytoplasmic granule. The enzyme catalyses L-arginyl-[protein] + H2O = L-citrullyl-[protein] + NH4(+). Its activity is regulated as follows. Strongly Inhibited by F-amidine and N-alpha-benzoyl-N5-(2-chloro-1-iminoethyl)-L-ornithine amide (Cl-amidine). These inhibitors are however not specific to PADI4 and also inhibit other members of the family. Incorporation of a carboxylate ortho to the backbone amide of Cl-amidine results in inhibitors with increased specificity for PADI4: N-alpha-(2-carboxyl)benzoyl-N(5)-(2-fluoro-1-iminoethyl)-L-ornithine amide (o-F-amidine) and N-alpha-(2-carboxyl)benzoyl-N(5)-(2-chloro-1-iminoethyl)-L-ornithine amide (o-Cl-amidine). Strongly and specifically inhibited by Thr-Asp-F-amidine (TDFA); other members of the family are not inhibited. Its function is as follows. Catalyzes the citrullination/deimination of arginine residues of proteins such as histones, thereby playing a key role in histone code and regulation of stem cell maintenance. Citrullinates histone H1 at 'Arg-54' (to form H1R54ci), histone H3 at 'Arg-2', 'Arg-8', 'Arg-17' and/or 'Arg-26' (to form H3R2ci, H3R8ci, H3R17ci, H3R26ci, respectively) and histone H4 at 'Arg-3' (to form H4R3ci). Acts as a key regulator of stem cell maintenance by mediating citrullination of histone H1: citrullination of 'Arg-54' of histone H1 (H1R54ci) results in H1 displacement from chromatin and global chromatin decondensation, thereby promoting pluripotency and stem cell maintenance. Promotes profound chromatin decondensation during the innate immune response to infection in neutrophils by mediating formation of H1R54ci. Required for the formation of neutrophil extracellular traps (NETs); NETs are mainly composed of DNA fibers and are released by neutrophils to bind pathogens during inflammation. Citrullination of histone H3 prevents their methylation by CARM1 and HRMT1L2/PRMT1 and represses transcription. Citrullinates EP300/P300 at 'Arg-2142', which favors its interaction with NCOA2/GRIP1. In Homo sapiens (Human), this protein is Protein-arginine deiminase type-4 (PADI4).